A 90-amino-acid chain; its full sequence is Probable Fe(2+)-trafficking protein (90 aa).

The protein belongs to the Fe(2+)-trafficking protein family.

Could be a mediator in iron transactions between iron acquisition and iron-requiring processes, such as synthesis and/or repair of Fe-S clusters in biosynthetic enzymes. This is Probable Fe(2+)-trafficking protein from Albidiferax ferrireducens (strain ATCC BAA-621 / DSM 15236 / T118) (Rhodoferax ferrireducens).